A 243-amino-acid polypeptide reads, in one-letter code: Small ribosomal subunit protein uS3 (243 aa).

The region spanning 38-106 is the KH type-2 domain; the sequence is IRKYLNARLA…DIQINIFEVK (69 aa). Residues 214-243 are disordered; the sequence is PNFTQSKESGRGNNGGNNGGKNFKRKKNNR.

It belongs to the universal ribosomal protein uS3 family. In terms of assembly, part of the 30S ribosomal subunit. Forms a tight complex with proteins S10 and S14.

Functionally, binds the lower part of the 30S subunit head. Binds mRNA in the 70S ribosome, positioning it for translation. This Bacteroides thetaiotaomicron (strain ATCC 29148 / DSM 2079 / JCM 5827 / CCUG 10774 / NCTC 10582 / VPI-5482 / E50) protein is Small ribosomal subunit protein uS3.